The primary structure comprises 438 residues: Enolase (438 aa).

Residues histidine 159 and glutamate 168 each coordinate substrate. Catalysis depends on glutamate 211, which acts as the Proton donor. Mg(2+) contacts are provided by aspartate 246, glutamate 297, and aspartate 322. Substrate is bound by residues glutamate 297 and aspartate 322. The active-site Proton acceptor is the lysine 347. Substrate is bound by residues 374 to 377 (SHRS) and lysine 398.

The protein belongs to the enolase family. As to quaternary structure, homodimer. Mg(2+) is required as a cofactor.

The protein resides in the cytoplasm. It catalyses the reaction (2R)-2-phosphoglycerate = phosphoenolpyruvate + H2O. The protein operates within carbohydrate degradation; glycolysis; pyruvate from D-glyceraldehyde 3-phosphate: step 4/5. In Penicillium citrinum, this protein is Enolase (enoA).